A 176-amino-acid chain; its full sequence is Ferritin, middle subunit (176 aa).

In terms of domain architecture, Ferritin-like diiron spans glutamine 7–aspartate 156. Fe cation is bound by residues glutamate 24, glutamate 59, histidine 62, glutamate 104, and glutamine 138.

Belongs to the ferritin family. As to quaternary structure, in liver, forms a heteromer consisting of middle and heavy subunits. In spleen, forms a homomer. The functional molecule forms a roughly spherical shell with a diameter of 12 nm and contains a central cavity into which the insoluble mineral iron core is deposited. In terms of tissue distribution, liver and spleen (at protein level).

The catalysed reaction is 4 Fe(2+) + O2 + 4 H(+) = 4 Fe(3+) + 2 H2O. Stores iron in a soluble, non-toxic, readily available form. Important for iron homeostasis. Has ferroxidase activity. Iron is taken up in the ferrous form and deposited as ferric hydroxides after oxidation. This is Ferritin, middle subunit from Trematomus newnesi (Dusky notothen).